Reading from the N-terminus, the 412-residue chain is Peptidyl-prolyl cis-trans isomerase FKBP8 (412 aa).

The segment at 1–68 (MASCAEPSEP…GQPPAEEAEQ (68 aa)) is disordered. A compositionally biased stretch (acidic residues) spans 22 to 50 (EDFEVLDGVEDAEGEEEEEEEEEEEDDLS). The PPIase FKBP-type domain occupies 120 to 204 (GQVVTVHLQT…CLEVTLKTAV (85 aa)). Ca(2+)-binding residues include Asp-149 and Asp-151. A TPR 1 repeat occupies 221–254 (ANRKRECGNAHYQRADFVLAANSYDLAIKAITSS). Residues Lys-249, Lys-271, Lys-273, and Lys-284 each participate in a glycyl lysine isopeptide (Lys-Gly) (interchain with G-Cter in ubiquitin) cross-link. TPR repeat units lie at residues 272–305 (VKCL…QPDN) and 306–339 (IKAL…EPSN). Ser-296 carries the phosphoserine modification. Residues Lys-307, Lys-314, Lys-334, Lys-340, Lys-348, Lys-351, and Lys-352 each participate in a glycyl lysine isopeptide (Lys-Gly) (interchain with G-Cter in ubiquitin) cross-link. Residues 390-410 (WLFGATAVALGGVALSVVIAA) traverse the membrane as a helical segment.

In terms of assembly, homomultimers or heteromultimers (Potential). Forms heterodimer with calmodulin. When activated by calmodulin and calcium, interacts with the BH4 domain of BCL2 and weakly with BCL2L1/BCLX isoform Bcl-X(L). Does not bind and inhibit calcineurin. Interacts with ZFYVE27; may negatively regulate ZFYVE27 phosphorylation. (Microbial infection) Interacts with hepatitis C/HCV protein NS5A. Ca(2+) serves as cofactor. Ubiquitinated by PRKN during mitophagy, leading to its degradation and enhancement of mitophagy. Deubiquitinated by USP30. In terms of tissue distribution, widely expressed. Highest levels seen in the brain. Highly abundant in the retina.

The protein resides in the mitochondrion. The protein localises to the mitochondrion membrane. It carries out the reaction [protein]-peptidylproline (omega=180) = [protein]-peptidylproline (omega=0). In terms of biological role, constitutively inactive PPiase, which becomes active when bound to calmodulin and calcium. Seems to act as a chaperone for BCL2, targets it to the mitochondria and modulates its phosphorylation state. The BCL2/FKBP8/calmodulin/calcium complex probably interferes with the binding of BCL2 to its targets. The active form of FKBP8 may therefore play a role in the regulation of apoptosis. Involved in the inhibition of viral infection by influenza A viruses (IAV). This is Peptidyl-prolyl cis-trans isomerase FKBP8 (FKBP8) from Homo sapiens (Human).